A 533-amino-acid polypeptide reads, in one-letter code: CTP synthase (533 aa).

The amidoligase domain stretch occupies residues 1–269 (MKKNLKILVI…HEILSSKLNI (269 aa)). Serine 16 is a binding site for CTP. Residue serine 16 coordinates UTP. Residues 17 to 22 (GIGKGV) and aspartate 73 each bind ATP. Mg(2+) contacts are provided by aspartate 73 and glutamate 143. CTP-binding positions include 150–152 (DME), 190–195 (KSKPTQ), and lysine 226. Residues 190–195 (KSKPTQ) and lysine 226 contribute to the UTP site. Positions 304–533 (YAELDDSYAS…LFLGLIKACI (230 aa)) constitute a Glutamine amidotransferase type-1 domain. Glycine 355 contributes to the L-glutamine binding site. Cysteine 382 acts as the Nucleophile; for glutamine hydrolysis in catalysis. L-glutamine is bound by residues 383-386 (LGLQ), glutamate 406, and arginine 466. Active-site residues include histidine 511 and glutamate 513.

It belongs to the CTP synthase family. As to quaternary structure, homotetramer.

It catalyses the reaction UTP + L-glutamine + ATP + H2O = CTP + L-glutamate + ADP + phosphate + 2 H(+). The catalysed reaction is L-glutamine + H2O = L-glutamate + NH4(+). It carries out the reaction UTP + NH4(+) + ATP = CTP + ADP + phosphate + 2 H(+). Its pathway is pyrimidine metabolism; CTP biosynthesis via de novo pathway; CTP from UDP: step 2/2. With respect to regulation, allosterically activated by GTP, when glutamine is the substrate; GTP has no effect on the reaction when ammonia is the substrate. The allosteric effector GTP functions by stabilizing the protein conformation that binds the tetrahedral intermediate(s) formed during glutamine hydrolysis. Inhibited by the product CTP, via allosteric rather than competitive inhibition. Its function is as follows. Catalyzes the ATP-dependent amination of UTP to CTP with either L-glutamine or ammonia as the source of nitrogen. Regulates intracellular CTP levels through interactions with the four ribonucleotide triphosphates. This is CTP synthase from Borreliella burgdorferi (strain ATCC 35210 / DSM 4680 / CIP 102532 / B31) (Borrelia burgdorferi).